Here is a 189-residue protein sequence, read N- to C-terminus: Peptidyl-tRNA hydrolase (189 aa).

Tyr16 provides a ligand contact to tRNA. His21 functions as the Proton acceptor in the catalytic mechanism. The tRNA site is built by Phe67, Asn69, and Asn115.

Belongs to the PTH family. As to quaternary structure, monomer.

The protein localises to the cytoplasm. It carries out the reaction an N-acyl-L-alpha-aminoacyl-tRNA + H2O = an N-acyl-L-amino acid + a tRNA + H(+). Functionally, hydrolyzes ribosome-free peptidyl-tRNAs (with 1 or more amino acids incorporated), which drop off the ribosome during protein synthesis, or as a result of ribosome stalling. In terms of biological role, catalyzes the release of premature peptidyl moieties from peptidyl-tRNA molecules trapped in stalled 50S ribosomal subunits, and thus maintains levels of free tRNAs and 50S ribosomes. The sequence is that of Peptidyl-tRNA hydrolase from Legionella pneumophila (strain Lens).